A 199-amino-acid polypeptide reads, in one-letter code: Fe/S biogenesis protein NfuA (199 aa).

The [4Fe-4S] cluster site is built by Cys-151 and Cys-154.

Belongs to the NfuA family. Homodimer. [4Fe-4S] cluster is required as a cofactor.

Involved in iron-sulfur cluster biogenesis. Binds a 4Fe-4S cluster, can transfer this cluster to apoproteins, and thereby intervenes in the maturation of Fe/S proteins. Could also act as a scaffold/chaperone for damaged Fe/S proteins. The chain is Fe/S biogenesis protein NfuA from Xylella fastidiosa (strain 9a5c).